Here is an 802-residue protein sequence, read N- to C-terminus: Copper-exporting P-type ATPase (802 aa).

HMA domains follow at residues 5–70 (KKTT…YGVA) and 72–138 (ETVE…YDAS). Cysteine 16, cysteine 19, cysteine 83, and cysteine 86 together coordinate Cu(+). 6 helical membrane passes run 161 to 181 (LIIS…HLFN), 192 to 212 (WFQF…FYVG), 224 to 244 (MDVL…YEMI), 256 to 276 (LYFE…YLEA), 411 to 431 (YFVP…ITLV), and 438 to 458 (PALV…LGLA). Residue aspartate 495 is the 4-aspartylphosphate intermediate of the active site. Mg(2+)-binding residues include aspartate 690 and aspartate 694. A run of 2 helical transmembrane segments spans residues 748-767 (LFWA…LGLL) and 771-790 (VAGA…ALRL).

It belongs to the cation transport ATPase (P-type) (TC 3.A.3) family. Type IB subfamily.

The protein localises to the cell membrane. The enzyme catalyses Cu(+)(in) + ATP + H2O = Cu(+)(out) + ADP + phosphate + H(+). Involved in copper export. In Staphylococcus aureus (strain bovine RF122 / ET3-1), this protein is Copper-exporting P-type ATPase (copA).